A 178-amino-acid chain; its full sequence is Peptide deformylase 2 (178 aa).

Residues cysteine 101 and histidine 143 each coordinate Fe cation. The active site involves glutamate 144. Position 147 (histidine 147) interacts with Fe cation.

Belongs to the polypeptide deformylase family. Requires Fe(2+) as cofactor.

It carries out the reaction N-terminal N-formyl-L-methionyl-[peptide] + H2O = N-terminal L-methionyl-[peptide] + formate. In terms of biological role, removes the formyl group from the N-terminal Met of newly synthesized proteins. Requires at least a dipeptide for an efficient rate of reaction. N-terminal L-methionine is a prerequisite for activity but the enzyme has broad specificity at other positions. In Pseudomonas putida (strain ATCC 47054 / DSM 6125 / CFBP 8728 / NCIMB 11950 / KT2440), this protein is Peptide deformylase 2.